Consider the following 270-residue polypeptide: Aliphatic sulfonates import ATP-binding protein SsuB 3 (270 aa).

The 222-residue stretch at 17 to 238 (LAVRKLKKAF…VRGSHRLAAL (222 aa)) folds into the ABC transporter domain. 49-56 (GRSGCGKS) contributes to the ATP binding site.

The protein belongs to the ABC transporter superfamily. Aliphatic sulfonates importer (TC 3.A.1.17.2) family. The complex is composed of two ATP-binding proteins (SsuB), two transmembrane proteins (SsuC) and a solute-binding protein (SsuA).

The protein localises to the cell inner membrane. It carries out the reaction ATP + H2O + aliphatic sulfonate-[sulfonate-binding protein]Side 1 = ADP + phosphate + aliphatic sulfonateSide 2 + [sulfonate-binding protein]Side 1.. Its function is as follows. Part of the ABC transporter complex SsuABC involved in aliphatic sulfonates import. Responsible for energy coupling to the transport system. The protein is Aliphatic sulfonates import ATP-binding protein SsuB 3 of Pseudomonas syringae pv. syringae (strain B728a).